A 562-amino-acid polypeptide reads, in one-letter code: Actin-related protein 8 (562 aa).

Position 248 to 251 (248 to 251 (DVGD)) interacts with ATP.

This sequence belongs to the actin family. ARP8 subfamily. Component of the chromatin remodeling Ino80 complex. Exists as monomers and dimers, but the dimer is most probably the biologically relevant form required for stable interactions with histones that exploits the twofold symmetry of the nucleosome core.

It localises to the nucleus. Plays an important role in the functional organization of mitotic chromosomes. Exhibits low basal ATPase activity, and unable to polymerize. Functionally, proposed core component of the chromatin remodeling INO80 complex which is involved in transcriptional regulation, DNA replication and probably DNA repair. Strongly prefer nucleosomes and H3-H4 tetramers over H2A-H2B dimers, suggesting it may act as a nucleosome recognition module within the complex. The sequence is that of Actin-related protein 8 from Aedes aegypti (Yellowfever mosquito).